A 391-amino-acid chain; its full sequence is Coiled-coil domain-containing protein 85C (391 aa).

2 coiled-coil regions span residues 19 to 86 (EELL…RELC) and 116 to 146 (KEVG…KEII). Disordered regions lie at residues 155–238 (GAGS…LNDS) and 278–303 (PYHS…TRVT). Positions 157-175 (GSRSSIDSQNSLTNLNGSS) are enriched in polar residues. Low complexity predominate over residues 182 to 194 (DGSSTSSTGSAGS). Residues 280-303 (HSESQLSPLPQYQEPLQNGSTRVT) are compositionally biased toward polar residues.

Belongs to the CCDC85 family.

The protein localises to the cell junction. The protein resides in the tight junction. Its subcellular location is the adherens junction. May play a role in cell-cell adhesion and epithelium development through its interaction with proteins of the beta-catenin family. May play an important role in cortical development, especially in the maintenance of radial glia. This is Coiled-coil domain-containing protein 85C (ccdc85c) from Xenopus tropicalis (Western clawed frog).